Reading from the N-terminus, the 121-residue chain is ORF8 protein (121 aa).

An N-terminal signal peptide occupies residues 1 to 15; the sequence is MKFLVFLGIITTVAA. The SARS ORF8 Ig-like domain maps to 19–121; it reads ECSLQSCTQH…HDVRVVLDFI (103 aa). Cystine bridges form between Cys25/Cys90, Cys37/Cys102, and Cys61/Cys83. Asn78 carries an N-linked (GlcNAc...) (complex) asparagine; by host glycan.

Homodimer. Interacts with host IL17RA. Interacts with host IL17RC. Interacts with host MHC-I. In terms of processing, glycosylated by the host when secreted via the conventional pathway. The glycosylated form cannot bind IL17A and would not participate in the cytokine storm.

The protein localises to the secreted. Its function is as follows. Plays a role in modulating the host immune response. May act as a secreted virokine by mimicking interleukin-17A (IL17A), and thereby binding to the IL17RA receptor, leading to activation of the IL17 pathway and increased secretion of pro-inflammatory factors. Contributes to the cytokine storm during SARS-CoV-2 infection when secreted by unconventional pathway. May act by down-regulating major histocompability complex class I (MHC-I) at cell surface. May inhibit expression of some members of the IFN-stimulated gene (ISG) family including hosts IGF2BP1/ZBP1, MX1 and MX2, and DHX58. This Severe acute respiratory syndrome coronavirus 2 (2019-nCoV) protein is ORF8 protein.